Here is a 1014-residue protein sequence, read N- to C-terminus: Probable transport protein MmpL11 (1014 aa).

12 consecutive transmembrane segments (helical) span residues Trp-13 to Gln-33, Val-156 to Asn-173, Ile-188 to Ala-208, Thr-235 to Met-255, Gly-279 to Ile-299, Ala-311 to Ala-331, Ala-373 to Gly-393, Thr-530 to Ile-550, Val-560 to Trp-580, Val-598 to Leu-618, Ala-649 to Ala-669, and Ile-671 to Val-691. The disordered stretch occupies residues Ser-783–Gly-802.

It belongs to the resistance-nodulation-cell division (RND) (TC 2.A.6) family. MmpL subfamily.

The protein resides in the cell membrane. This Mycobacterium leprae (strain TN) protein is Probable transport protein MmpL11 (mmpL11).